The chain runs to 390 residues: 4-hydroxy-3-methylbut-2-en-1-yl diphosphate synthase (flavodoxin) (390 aa).

[4Fe-4S] cluster contacts are provided by C281, C284, C316, and E323.

Belongs to the IspG family. Requires [4Fe-4S] cluster as cofactor.

It carries out the reaction (2E)-4-hydroxy-3-methylbut-2-enyl diphosphate + oxidized [flavodoxin] + H2O + 2 H(+) = 2-C-methyl-D-erythritol 2,4-cyclic diphosphate + reduced [flavodoxin]. It functions in the pathway isoprenoid biosynthesis; isopentenyl diphosphate biosynthesis via DXP pathway; isopentenyl diphosphate from 1-deoxy-D-xylulose 5-phosphate: step 5/6. In terms of biological role, converts 2C-methyl-D-erythritol 2,4-cyclodiphosphate (ME-2,4cPP) into 1-hydroxy-2-methyl-2-(E)-butenyl 4-diphosphate. The chain is 4-hydroxy-3-methylbut-2-en-1-yl diphosphate synthase (flavodoxin) from Salinispora tropica (strain ATCC BAA-916 / DSM 44818 / JCM 13857 / NBRC 105044 / CNB-440).